A 610-amino-acid polypeptide reads, in one-letter code: UvrABC system protein C (610 aa).

The GIY-YIG domain occupies 16-94 (SQPGVYRMYD…IKLYQPRYNV (79 aa)). One can recognise a UVR domain in the interval 204-239 (DQVLTQLIARMEKASQDLAFEEAARIRDQIQAVRRV).

This sequence belongs to the UvrC family. Interacts with UvrB in an incision complex.

It is found in the cytoplasm. In terms of biological role, the UvrABC repair system catalyzes the recognition and processing of DNA lesions. UvrC both incises the 5' and 3' sides of the lesion. The N-terminal half is responsible for the 3' incision and the C-terminal half is responsible for the 5' incision. This chain is UvrABC system protein C, found in Salmonella dublin (strain CT_02021853).